An 89-amino-acid polypeptide reads, in one-letter code: HssA/B-like protein 21 (89 aa).

Belongs to the hssA/B family.

This is HssA/B-like protein 21 (hssl21) from Dictyostelium discoideum (Social amoeba).